We begin with the raw amino-acid sequence, 284 residues long: NAD kinase (284 aa).

Aspartate 65 functions as the Proton acceptor in the catalytic mechanism. Residues 65–66 (DG), 139–140 (ND), arginine 150, arginine 167, aspartate 169, and glutamine 239 contribute to the NAD(+) site.

Belongs to the NAD kinase family. A divalent metal cation is required as a cofactor.

Its subcellular location is the cytoplasm. The catalysed reaction is NAD(+) + ATP = ADP + NADP(+) + H(+). In terms of biological role, involved in the regulation of the intracellular balance of NAD and NADP, and is a key enzyme in the biosynthesis of NADP. Catalyzes specifically the phosphorylation on 2'-hydroxyl of the adenosine moiety of NAD to yield NADP. The chain is NAD kinase from Desulfatibacillum aliphaticivorans.